A 245-amino-acid chain; its full sequence is 1-(5-phosphoribosyl)-5-[(5-phosphoribosylamino)methylideneamino] imidazole-4-carboxamide isomerase (245 aa).

The Proton acceptor role is filled by D7. D129 functions as the Proton donor in the catalytic mechanism.

Belongs to the HisA/HisF family.

It localises to the cytoplasm. The catalysed reaction is 1-(5-phospho-beta-D-ribosyl)-5-[(5-phospho-beta-D-ribosylamino)methylideneamino]imidazole-4-carboxamide = 5-[(5-phospho-1-deoxy-D-ribulos-1-ylimino)methylamino]-1-(5-phospho-beta-D-ribosyl)imidazole-4-carboxamide. The protein operates within amino-acid biosynthesis; L-histidine biosynthesis; L-histidine from 5-phospho-alpha-D-ribose 1-diphosphate: step 4/9. This is 1-(5-phosphoribosyl)-5-[(5-phosphoribosylamino)methylideneamino] imidazole-4-carboxamide isomerase from Escherichia fergusonii (strain ATCC 35469 / DSM 13698 / CCUG 18766 / IAM 14443 / JCM 21226 / LMG 7866 / NBRC 102419 / NCTC 12128 / CDC 0568-73).